The chain runs to 292 residues: GTP cyclohydrolase FolE2 (292 aa).

Belongs to the GTP cyclohydrolase IV family.

It carries out the reaction GTP + H2O = 7,8-dihydroneopterin 3'-triphosphate + formate + H(+). It participates in cofactor biosynthesis; 7,8-dihydroneopterin triphosphate biosynthesis; 7,8-dihydroneopterin triphosphate from GTP: step 1/1. Functionally, converts GTP to 7,8-dihydroneopterin triphosphate. The protein is GTP cyclohydrolase FolE2 of Staphylococcus aureus (strain Mu50 / ATCC 700699).